The primary structure comprises 352 residues: Probable dual-specificity RNA methyltransferase RlmN (352 aa).

Residue Glu92 is the Proton acceptor of the active site. In terms of domain architecture, Radical SAM core spans 98–328; the sequence is YKHGFTACIS…ATIRREMGTD (231 aa). Cysteines 105 and 333 form a disulfide. Residues Cys112, Cys116, and Cys119 each contribute to the [4Fe-4S] cluster site. S-adenosyl-L-methionine is bound by residues 159 to 160, Ser191, 214 to 216, and Asn290; these read GE and SLH. Cys333 (S-methylcysteine intermediate) is an active-site residue.

This sequence belongs to the radical SAM superfamily. RlmN family. The cofactor is [4Fe-4S] cluster.

The protein localises to the cytoplasm. The catalysed reaction is adenosine(2503) in 23S rRNA + 2 reduced [2Fe-2S]-[ferredoxin] + 2 S-adenosyl-L-methionine = 2-methyladenosine(2503) in 23S rRNA + 5'-deoxyadenosine + L-methionine + 2 oxidized [2Fe-2S]-[ferredoxin] + S-adenosyl-L-homocysteine. It carries out the reaction adenosine(37) in tRNA + 2 reduced [2Fe-2S]-[ferredoxin] + 2 S-adenosyl-L-methionine = 2-methyladenosine(37) in tRNA + 5'-deoxyadenosine + L-methionine + 2 oxidized [2Fe-2S]-[ferredoxin] + S-adenosyl-L-homocysteine. In terms of biological role, specifically methylates position 2 of adenine 2503 in 23S rRNA and position 2 of adenine 37 in tRNAs. The polypeptide is Probable dual-specificity RNA methyltransferase RlmN (Alkaliphilus metalliredigens (strain QYMF)).